The chain runs to 977 residues: Monofunctional C1-tetrahydrofolate synthase, mitochondrial (977 aa).

A mitochondrion-targeting transit peptide spans 1 to 31 (MSVRLPLLLRQLGRQQLPSGPACRLRELCRS). Residues 29–71 (CRSGSRSSSSGGGDPEGLRGRRLQDGQTFSSHGPGNPEAPGMD) are disordered. The segment at 32-347 (GSRSSSSGGG…REQQHRRWRL (316 aa)) is methylenetetrahydrofolate dehydrogenase and cyclohydrolase. Lys188 carries the N6-acetyllysine; alternate modification. At Lys188 the chain carries N6-succinyllysine; alternate. Positions 348–977 (HCLKLQPLSP…TETEQVKGLF (630 aa)) are formyltetrahydrofolate synthetase. Ser356 is modified (phosphoserine). 422–429 (TPLGEGKS) lines the ATP pocket. N6-succinyllysine is present on Lys595.

The protein in the N-terminal section; belongs to the tetrahydrofolate dehydrogenase/cyclohydrolase family. This sequence in the C-terminal section; belongs to the formate--tetrahydrofolate ligase family. As to quaternary structure, homodimer.

The protein resides in the mitochondrion. The catalysed reaction is (6S)-5,6,7,8-tetrahydrofolate + formate + ATP = (6R)-10-formyltetrahydrofolate + ADP + phosphate. It functions in the pathway one-carbon metabolism; tetrahydrofolate interconversion. May provide the missing metabolic reaction required to link the mitochondria and the cytoplasm in the mammalian model of one-carbon folate metabolism complementing thus the enzymatic activities of MTHFD2. The protein is Monofunctional C1-tetrahydrofolate synthase, mitochondrial (Mthfd1l) of Mus musculus (Mouse).